The chain runs to 494 residues: Zinc finger and SCAN domain-containing protein 30 (494 aa).

The SCAN box domain occupies Arg-48–Leu-130. Lys-197 is covalently cross-linked (Glycyl lysine isopeptide (Lys-Gly) (interchain with G-Cter in SUMO2)). 7 consecutive C2H2-type zinc fingers follow at residues Tyr-301–His-323, Tyr-329–His-351, Tyr-357–His-379, Tyr-385–His-407, Tyr-413–His-435, Tyr-441–His-463, and Tyr-469–His-491.

It belongs to the krueppel C2H2-type zinc-finger protein family.

The protein resides in the nucleus. In terms of biological role, may be involved in transcriptional regulation. This Homo sapiens (Human) protein is Zinc finger and SCAN domain-containing protein 30 (ZSCAN30).